The chain runs to 95 residues: MTSPVNVDVKLGVNKFNVDEEHPHIVVKADADKQVLELLVKACPAGLYKKQDDGSVRFDYAGCLECGTCRILGLGSALEQWEYPRGTFGVEFRYG.

This sequence belongs to the bacterial-type ferredoxin family. FixX subfamily.

Could be part of an electron transfer system required for anaerobic carnitine reduction. Could be a 3Fe-4S cluster-containing protein. This Shigella flexneri protein is Ferredoxin-like protein FixX (fixX).